The primary structure comprises 262 residues: Zinc import ATP-binding protein ZnuC (262 aa).

The ABC transporter domain occupies 5 to 220 (VSLEQLCVEF…PSYIALFGNA (216 aa)). 37-44 (GPNGAGKS) is an ATP binding site. The segment at 236-262 (HHDLSGSPVSGDATSCSNHNHGHHHHD) is disordered.

The protein belongs to the ABC transporter superfamily. Zinc importer (TC 3.A.1.15.5) family. The complex is composed of two ATP-binding proteins (ZnuC), two transmembrane proteins (ZnuB) and a solute-binding protein (ZnuA).

It is found in the cell inner membrane. The enzyme catalyses Zn(2+)(out) + ATP(in) + H2O(in) = Zn(2+)(in) + ADP(in) + phosphate(in) + H(+)(in). Functionally, part of the ABC transporter complex ZnuABC involved in zinc import. Responsible for energy coupling to the transport system. The protein is Zinc import ATP-binding protein ZnuC of Vibrio parahaemolyticus serotype O3:K6 (strain RIMD 2210633).